The primary structure comprises 628 residues: MHSRSSDPPTGSKLAALTLGAVGVVYGDIGTSPLYALKEVFAHGRIDITPDNIYGILSLVVWTLTVIVSLKYVLLILRADNNGEGGLIAMLALASTAVKERPVLRRRLLILGVFGTAIFFGDGVITPAISVLSAVEGLEVAAPGLHRYVVPVTLVVLTLLFAAQRFGTGGIGKFFGPVTAVWFIVLALLGVVHIVENPAVLAALSPHYALAFMWQHPGTAFVSLGAVVLCVTGAEALYADMGHFGKRPIRLAWFSLVMPALMINYFGQGAMLLQRPETVKNPFYEMAPEWALYPLIVLATLATVIASQALITAAFSVTKQAIQLGYFPRLRVTHTSVKETGQIYVPFVNWGLYACIVLAVVTFGSSSKLASAYGIAVTTDMLITTTMTFFVIRYSWKYPWALCVAATGFFFLVDAMFFAANAIKILDGGWFPLAIGAAMFTLMMTWKQGRRLMSERLREEAIDLKSFLESVFISPPTRVQGTAVFLAAEQGSTPNALLHNLKHNKVLHEQNLFVTVRHHEVPWIPFSKRCEIESLGHCCWQVTLNFGFKNEPDVPEALALLRGRGVQLDDMETSYFLSRDIVIPTIGKGMAIWREKLFCSMHRNAAAAADFLNLPTNRVVELGSKVEI.

The next 11 helical transmembrane spans lie at 56-76, 109-129, 141-161, 174-194, 209-229, 253-273, 295-315, 343-363, 372-392, 400-420, and 425-445; these read ILSL…VLLI, LILG…TPAI, AAPG…TLLF, FFGP…VVHI, ALAF…AVVL, WFSL…AMLL, LIVL…TAAF, IYVP…VVTF, AYGI…FFVI, WALC…FFAA, and ILDG…LMMT.

This sequence belongs to the HAK/KUP transporter (TC 2.A.72) family.

It is found in the cell inner membrane. The catalysed reaction is K(+)(in) + H(+)(in) = K(+)(out) + H(+)(out). Its function is as follows. Transport of potassium into the cell. Likely operates as a K(+):H(+) symporter. In Methylibium petroleiphilum (strain ATCC BAA-1232 / LMG 22953 / PM1), this protein is Probable potassium transport system protein Kup.